Reading from the N-terminus, the 720-residue chain is Aminopeptidase RNPEPL1 (720 aa).

321 to 325 (VAMEN) contributes to the substrate binding site. His348 is a binding site for Zn(2+). Glu349 (proton acceptor) is an active-site residue. The Zn(2+) site is built by His352 and Glu371. Residues 671–708 (GLGPSAEPSTEPSTDLGGAEADTNPDSPALLLGDEAPS) are disordered.

It belongs to the peptidase M1 family. Zn(2+) serves as cofactor.

The enzyme catalyses Release of N-terminal amino acids, preferentially methionine, from peptides and arylamides.. Broad specificity aminopeptidase which preferentially hydrolyzes an N-terminal methionine, citrulline or glutamine. In Mus musculus (Mouse), this protein is Aminopeptidase RNPEPL1.